Reading from the N-terminus, the 380-residue chain is MIYLPDGVQDFLPEEYKFKRKIEEKFREVFIKFGYQEIMPPTFEYNDNFSVLFDENNLYRFFDKKGNILALRPDVTTQIARIVSTKLKGSFPLKLCYVANVYRYDDPQVGKMREFTQAGIELIGTNHEESDAEIIAVAIEALKSIGIEDFKVDVGQVEFFKRVVEDLELQNEEINLLREFLQQKNQSAIEEFINDKGIRGKKAKFLSELPLLFGGEEVLKRAKELYDTPKLGETIDYLERVYRILKDFGMEEYISFDLGMVQNLNYYTGIIFRCFVKGIGYAICTGGRYDGLLGIFGEHIPATGFAISVERSMLALQKQKKDIIDKSWRVLIKYKENLRSNAYKKATLLRGEGKIVEMYSYEKAKHVDENSFDEIIDMEE.

This sequence belongs to the class-II aminoacyl-tRNA synthetase family. HisZ subfamily. Heteromultimer composed of HisG and HisZ subunits.

The protein localises to the cytoplasm. Its pathway is amino-acid biosynthesis; L-histidine biosynthesis; L-histidine from 5-phospho-alpha-D-ribose 1-diphosphate: step 1/9. Functionally, required for the first step of histidine biosynthesis. May allow the feedback regulation of ATP phosphoribosyltransferase activity by histidine. In Thermoanaerobacter sp. (strain X514), this protein is ATP phosphoribosyltransferase regulatory subunit.